The sequence spans 230 residues: 7-cyano-7-deazaguanine synthase (230 aa).

Residue 8–18 (LSGGMDSAVVT) participates in ATP binding. Zn(2+) is bound by residues C186, C196, C199, and C202.

It belongs to the QueC family. Requires Zn(2+) as cofactor.

It carries out the reaction 7-carboxy-7-deazaguanine + NH4(+) + ATP = 7-cyano-7-deazaguanine + ADP + phosphate + H2O + H(+). Its pathway is purine metabolism; 7-cyano-7-deazaguanine biosynthesis. Its function is as follows. Catalyzes the ATP-dependent conversion of 7-carboxy-7-deazaguanine (CDG) to 7-cyano-7-deazaguanine (preQ(0)). The polypeptide is 7-cyano-7-deazaguanine synthase (Xylella fastidiosa (strain 9a5c)).